The sequence spans 291 residues: 4-hydroxy-tetrahydrodipicolinate synthase (291 aa).

Thr45 is a pyruvate binding site. Residue Tyr133 is the Proton donor/acceptor of the active site. Catalysis depends on Lys161, which acts as the Schiff-base intermediate with substrate. Ile203 provides a ligand contact to pyruvate.

The protein belongs to the DapA family. In terms of assembly, homotetramer; dimer of dimers.

It is found in the cytoplasm. The enzyme catalyses L-aspartate 4-semialdehyde + pyruvate = (2S,4S)-4-hydroxy-2,3,4,5-tetrahydrodipicolinate + H2O + H(+). The protein operates within amino-acid biosynthesis; L-lysine biosynthesis via DAP pathway; (S)-tetrahydrodipicolinate from L-aspartate: step 3/4. Functionally, catalyzes the condensation of (S)-aspartate-beta-semialdehyde [(S)-ASA] and pyruvate to 4-hydroxy-tetrahydrodipicolinate (HTPA). In Methylococcus capsulatus (strain ATCC 33009 / NCIMB 11132 / Bath), this protein is 4-hydroxy-tetrahydrodipicolinate synthase.